We begin with the raw amino-acid sequence, 87 residues long: Selenoprotein W (87 aa).

Residues 10-13 (CGAU) constitute a cross-link (cysteinyl-selenocysteine (Cys-Sec); redox-active). U13 is a non-standard amino acid (selenocysteine). S-glutathionyl cysteine is present on C37.

This sequence belongs to the SelWTH family. Selenoprotein W subfamily. In terms of assembly, interacts with DPYSL2, PRDX1, YWHAB, YWHAG, HSP70 and HSP90. As to expression, detected in muscle, heart, tongue, brain, lung, spleen, kidney and liver. Highest levels expressed in muscle and heart whereas lowest levels detected in liver (at protein level).

Its subcellular location is the cytoplasm. Functionally, plays a role as a glutathione (GSH)-dependent antioxidant. May be involved in a redox-related process. May play a role in the myopathies of selenium deficiency. This Ovis aries (Sheep) protein is Selenoprotein W.